The following is a 270-amino-acid chain: HTH-type transcriptional activator AllS (270 aa).

Positions leucine 4–threonine 61 constitute an HTH lysR-type domain. The segment at residues phenylalanine 21–lysine 40 is a DNA-binding region (H-T-H motif).

The protein belongs to the LysR transcriptional regulatory family.

Positive regulator essential for the expression of allD operon. Binds to the allD promoter. This Klebsiella pneumoniae protein is HTH-type transcriptional activator AllS (allS).